The primary structure comprises 160 residues: Urease accessory protein UreE (160 aa).

Belongs to the UreE family.

The protein localises to the cytoplasm. Functionally, involved in urease metallocenter assembly. Binds nickel. Probably functions as a nickel donor during metallocenter assembly. The sequence is that of Urease accessory protein UreE from Acinetobacter baumannii (strain AB307-0294).